The chain runs to 220 residues: Large ribosomal subunit protein bL21 (220 aa).

Positions 109-158 (SKKVAAKPATSEEKAAEEKPAKAKKEAAEKGASPRETKAAPLFSAPEGEP) are disordered. A compositionally biased stretch (basic and acidic residues) spans 118–146 (TSEEKAAEEKPAKAKKEAAEKGASPRETK).

Belongs to the bacterial ribosomal protein bL21 family. As to quaternary structure, part of the 50S ribosomal subunit. Contacts protein L20.

This protein binds to 23S rRNA in the presence of protein L20. The chain is Large ribosomal subunit protein bL21 from Chelativorans sp. (strain BNC1).